A 340-amino-acid polypeptide reads, in one-letter code: Toxin coregulated pilus biosynthesis protein E (340 aa).

3 helical membrane-spanning segments follow: residues 108 to 131 (AISS…GYSV), 146 to 161 (WPGV…FSLY), and 312 to 333 (NISL…FSLV).

The protein belongs to the GSP F family.

Its subcellular location is the cell inner membrane. Probably involved in cholera toxin receptor (GM1) interaction in order to bring the cells within close proximity of the ganglioside for efficient toxin delivery. This chain is Toxin coregulated pilus biosynthesis protein E (tcpE), found in Vibrio cholerae serotype O1 (strain ATCC 39315 / El Tor Inaba N16961).